The following is a 123-amino-acid chain: NADH-quinone oxidoreductase subunit A (123 aa).

Helical transmembrane passes span Y11–L31, L68–I88, and I93–I113.

The protein belongs to the complex I subunit 3 family. As to quaternary structure, NDH-1 is composed of 14 different subunits. Subunits NuoA, H, J, K, L, M, N constitute the membrane sector of the complex.

The protein resides in the cell inner membrane. It carries out the reaction a quinone + NADH + 5 H(+)(in) = a quinol + NAD(+) + 4 H(+)(out). Its function is as follows. NDH-1 shuttles electrons from NADH, via FMN and iron-sulfur (Fe-S) centers, to quinones in the respiratory chain. The immediate electron acceptor for the enzyme in this species is believed to be ubiquinone. Couples the redox reaction to proton translocation (for every two electrons transferred, four hydrogen ions are translocated across the cytoplasmic membrane), and thus conserves the redox energy in a proton gradient. The protein is NADH-quinone oxidoreductase subunit A of Rickettsia felis (strain ATCC VR-1525 / URRWXCal2) (Rickettsia azadi).